We begin with the raw amino-acid sequence, 316 residues long: Probable 5-dehydro-4-deoxyglucarate dehydratase 1 (316 aa).

It belongs to the DapA family.

It catalyses the reaction 5-dehydro-4-deoxy-D-glucarate + H(+) = 2,5-dioxopentanoate + CO2 + H2O. It participates in carbohydrate acid metabolism; D-glucarate degradation; 2,5-dioxopentanoate from D-glucarate: step 2/2. The protein is Probable 5-dehydro-4-deoxyglucarate dehydratase 1 of Streptomyces coelicolor (strain ATCC BAA-471 / A3(2) / M145).